Consider the following 694-residue polypeptide: Scarecrow-like protein 33 (694 aa).

Residues 289–313 (PAKASTFSKSPKGEKPEASGNSYTK) form a disordered region. Residues 309–692 (NSYTKETPDL…RIVYGSSIWV (384 aa)) enclose the GRAS domain. Positions 316 to 376 (PDLRTMLVSC…EARLAGIGTQ (61 aa)) are leucine repeat I (LRI). The tract at residues 395 to 462 (YQTYISVCPF…GSSCKLRITG (68 aa)) is VHIID. Residues 428-432 (IHIID) carry the VHIID motif. Positions 478 to 510 (ETGRRLAKYCQKFNIPFEYNAIAQKWESIKLED) are leucine repeat II (LRII). The interval 519-613 (VAVNSLFRFR…KEFYGREIMN (95 aa)) is PFYRE. Residues 616 to 692 (ACEGTERVER…RIVYGSSIWV (77 aa)) form an SAW region.

This sequence belongs to the GRAS family. In terms of assembly, interacts with SNRNP35.

It is found in the nucleus. In terms of biological role, probable transcription factor involved in plant development. The polypeptide is Scarecrow-like protein 33 (SCL33) (Arabidopsis thaliana (Mouse-ear cress)).